A 137-amino-acid chain; its full sequence is Secreted RxLR effector protein 67 (137 aa).

A signal peptide spans 1–18; that stretch reads MRLYILVLAAIAVTLVFA. The RxLR-dEER motif lies at 32-61; sequence RALRQASITDEKSDDSLNAQAPPLSKSEKR. The disordered stretch occupies residues 40–65; the sequence is TDEKSDDSLNAQAPPLSKSEKRLSRS. The chain crosses the membrane as a helical span at residues 114-134; the sequence is WFVRMILEAGIFWAVFHCLSA.

This sequence belongs to the RxLR effector family.

Its subcellular location is the secreted. It localises to the host cytoplasm. It is found in the host nucleus. The protein resides in the membrane. In terms of biological role, effector that partially suppresses the tobacco programmed cell death induced by cell death-inducing proteins. The protein is Secreted RxLR effector protein 67 of Plasmopara viticola (Downy mildew of grapevine).